A 608-amino-acid chain; its full sequence is Histone-arginine methyltransferase CARM1 (608 aa).

The residue at position 2 (alanine 2) is an N-acetylalanine. The tract at residues 27–138 (ATVSVFPGAR…GHTLERSVFS (112 aa)) is interaction with C9orf72. The 308-residue stretch at 146 to 453 (AVQYFQFYGY…KRQSYDISIV (308 aa)) folds into the SAM-dependent MTase PRMT-type domain. Residues glutamine 159, arginine 168, glycine 192, and glutamate 214 each coordinate S-adenosyl-L-methionine. Serine 216 bears the Phosphoserine mark. Residue lysine 227 forms a Glycyl lysine isopeptide (Lys-Gly) (interchain with G-Cter in ubiquitin) linkage. S-adenosyl-L-methionine is bound by residues glutamate 243 and serine 271. Residues 346–379 (RILMAKSVKYTVNFLEAKEGDLHRIEIPFKFHML) are required for nuclear translocation. Positions 499 to 608 (TGSTYNLSSG…IPTNTMHYGS (110 aa)) are transactivation domain. At arginine 550 the chain carries Dimethylated arginine.

It belongs to the class I-like SAM-binding methyltransferase superfamily. Protein arginine N-methyltransferase family. As to quaternary structure, homodimer. Interacts with NR1H4. Interacts with SNRPC. Interacts with the C-terminus of NCOA2/GRIP1, NCO3/ACTR and NCOA1/SRC1. Part of a complex consisting of CARM1, EP300/P300 and NCOA2/GRIP1. Interacts with FLII, TP53, myogenic factor MEF2, EP300/P300, TRIM24, CREBBP and CTNNB1. Interacts with RELA. Identified in a complex containing CARM1, TRIM24 and NCOA2/GRIP1. Interacts with NCOA3/SRC3. Interacts with SKP2. Interacts (via PH domain-like fold) with C9orf72. Interacts with PARP1; promoting PARP1 recruimtent to replication forks. In terms of assembly, (Microbial infection) Interacts with HTLV-1 protein Tax. Post-translationally, auto-methylated on Arg-550. Methylation enhances transcription coactivator activity. Methylation is required for its role in the regulation of pre-mRNA alternative splicing. Phosphorylation at Ser-216 is strongly increased during mitosis, and decreases rapidly to a very low, basal level after entry into the G1 phase of the cell cycle. Phosphorylation at Ser-216 may promote location in the cytosol. Phosphorylation at Ser-216 interferes with S-adenosyl-L-methionine binding and strongly reduces methyltransferase activity. In terms of processing, ubiquitinated by E3 ubiquitin-protein ligase complex containing FBXO9 at Lys-227; leading to proteasomal degradation. As to expression, overexpressed in prostate adenocarcinomas and high-grade prostatic intraepithelial neoplasia.

It is found in the nucleus. It localises to the cytoplasm. The protein resides in the chromosome. It carries out the reaction L-arginyl-[protein] + 2 S-adenosyl-L-methionine = N(omega),N(omega)-dimethyl-L-arginyl-[protein] + 2 S-adenosyl-L-homocysteine + 2 H(+). Its activity is regulated as follows. Methylation of H3R17 (H3R17me) by CARM1 is stimulated by preacetylation of H3 'Lys-18' (H3K18ac) H3 'Lys-23' (H3K23ac) by EP300 and blocked by citrullination of H3 'Arg-17' (H3R17ci) by PADI4. Methylates (mono- and asymmetric dimethylation) the guanidino nitrogens of arginyl residues in several proteins involved in DNA packaging, transcription regulation, pre-mRNA splicing, and mRNA stability. Recruited to promoters upon gene activation together with histone acetyltransferases from EP300/P300 and p160 families, methylates histone H3 at 'Arg-17' (H3R17me), forming mainly asymmetric dimethylarginine (H3R17me2a), leading to activation of transcription via chromatin remodeling. During nuclear hormone receptor activation and TCF7L2/TCF4 activation, acts synergically with EP300/P300 and either one of the p160 histone acetyltransferases NCOA1/SRC1, NCOA2/GRIP1 and NCOA3/ACTR or CTNNB1/beta-catenin to activate transcription. During myogenic transcriptional activation, acts together with NCOA3/ACTR as a coactivator for MEF2C. During monocyte inflammatory stimulation, acts together with EP300/P300 as a coactivator for NF-kappa-B. Acts as a coactivator for PPARG, promotes adipocyte differentiation and the accumulation of brown fat tissue. Plays a role in the regulation of pre-mRNA alternative splicing by methylation of splicing factors. Also seems to be involved in p53/TP53 transcriptional activation. Methylates EP300/P300, both at 'Arg-2142', which may loosen its interaction with NCOA2/GRIP1, and at 'Arg-580' and 'Arg-604' in the KIX domain, which impairs its interaction with CREB and inhibits CREB-dependent transcriptional activation. Also methylates arginine residues in RNA-binding proteins PABPC1, ELAVL1 and ELAV4, which may affect their mRNA-stabilizing properties and the half-life of their target mRNAs. Acts as a transcriptional coactivator of ACACA/acetyl-CoA carboxylase by enriching H3R17 methylation at its promoter, thereby positively regulating fatty acid synthesis. Independently of its methyltransferase activity, involved in replication fork progression: promotes PARP1 recruitment to replication forks, leading to poly-ADP-ribosylation of chromatin at replication forks and reduced fork speed. This is Histone-arginine methyltransferase CARM1 (CARM1) from Homo sapiens (Human).